The following is a 501-amino-acid chain: NAD(P)H-quinone oxidoreductase chain 4, chloroplastic (501 aa).

14 consecutive transmembrane segments (helical) span residues F5–L25, I38–L58, G85–A105, S112–F130, L135–M155, F168–L188, A209–I229, H243–V263, S275–T295, I306–D326, G331–G351, L387–T407, I417–M437, and L463–V483.

The protein belongs to the complex I subunit 4 family.

It localises to the plastid. Its subcellular location is the chloroplast thylakoid membrane. The enzyme catalyses a plastoquinone + NADH + (n+1) H(+)(in) = a plastoquinol + NAD(+) + n H(+)(out). The catalysed reaction is a plastoquinone + NADPH + (n+1) H(+)(in) = a plastoquinol + NADP(+) + n H(+)(out). This Eucalyptus globulus subsp. globulus (Tasmanian blue gum) protein is NAD(P)H-quinone oxidoreductase chain 4, chloroplastic.